The chain runs to 253 residues: UPF0280 protein Mbar_A3697 (253 aa).

It belongs to the UPF0280 family.

The sequence is that of UPF0280 protein Mbar_A3697 from Methanosarcina barkeri (strain Fusaro / DSM 804).